Reading from the N-terminus, the 444-residue chain is Homogentisate 1,2-dioxygenase (444 aa).

The active-site Proton acceptor is the H298. Fe cation contacts are provided by H341 and E347. Homogentisate-binding residues include Y356 and H377. H377 is a Fe cation binding site.

This sequence belongs to the homogentisate dioxygenase family. In terms of assembly, hexamer; dimer of trimers. It depends on Fe cation as a cofactor.

It carries out the reaction homogentisate + O2 = 4-maleylacetoacetate + H(+). It functions in the pathway amino-acid degradation; L-phenylalanine degradation; acetoacetate and fumarate from L-phenylalanine: step 4/6. Its function is as follows. Involved in the catabolism of homogentisate (2,5-dihydroxyphenylacetate or 2,5-OH-PhAc), a central intermediate in the degradation of phenylalanine and tyrosine. Catalyzes the oxidative ring cleavage of the aromatic ring of homogentisate to yield maleylacetoacetate. This chain is Homogentisate 1,2-dioxygenase, found in Burkholderia cenocepacia (strain ATCC BAA-245 / DSM 16553 / LMG 16656 / NCTC 13227 / J2315 / CF5610) (Burkholderia cepacia (strain J2315)).